The following is a 202-amino-acid chain: ATP-dependent Clp protease proteolytic subunit (202 aa).

The active-site Nucleophile is Ser106. Residue His131 is part of the active site.

This sequence belongs to the peptidase S14 family. As to quaternary structure, fourteen ClpP subunits assemble into 2 heptameric rings which stack back to back to give a disk-like structure with a central cavity, resembling the structure of eukaryotic proteasomes.

The protein localises to the cytoplasm. It catalyses the reaction Hydrolysis of proteins to small peptides in the presence of ATP and magnesium. alpha-casein is the usual test substrate. In the absence of ATP, only oligopeptides shorter than five residues are hydrolyzed (such as succinyl-Leu-Tyr-|-NHMec, and Leu-Tyr-Leu-|-Tyr-Trp, in which cleavage of the -Tyr-|-Leu- and -Tyr-|-Trp bonds also occurs).. Cleaves peptides in various proteins in a process that requires ATP hydrolysis. Has a chymotrypsin-like activity. Plays a major role in the degradation of misfolded proteins. The chain is ATP-dependent Clp protease proteolytic subunit from Paracidovorax citrulli (strain AAC00-1) (Acidovorax citrulli).